A 404-amino-acid polypeptide reads, in one-letter code: Probable tRNA sulfurtransferase (404 aa).

One can recognise a THUMP domain in the interval 60-165; sequence QPIVEALKLV…DEAAYISYEE (106 aa). Residues 183–184, 208–209, Arg-265, Gly-287, and Gln-296 each bind ATP; these read ML and HF.

It belongs to the ThiI family.

Its subcellular location is the cytoplasm. It carries out the reaction [ThiI sulfur-carrier protein]-S-sulfanyl-L-cysteine + a uridine in tRNA + 2 reduced [2Fe-2S]-[ferredoxin] + ATP + H(+) = [ThiI sulfur-carrier protein]-L-cysteine + a 4-thiouridine in tRNA + 2 oxidized [2Fe-2S]-[ferredoxin] + AMP + diphosphate. The enzyme catalyses [ThiS sulfur-carrier protein]-C-terminal Gly-Gly-AMP + S-sulfanyl-L-cysteinyl-[cysteine desulfurase] + AH2 = [ThiS sulfur-carrier protein]-C-terminal-Gly-aminoethanethioate + L-cysteinyl-[cysteine desulfurase] + A + AMP + 2 H(+). The protein operates within cofactor biosynthesis; thiamine diphosphate biosynthesis. Functionally, catalyzes the ATP-dependent transfer of a sulfur to tRNA to produce 4-thiouridine in position 8 of tRNAs, which functions as a near-UV photosensor. Also catalyzes the transfer of sulfur to the sulfur carrier protein ThiS, forming ThiS-thiocarboxylate. This is a step in the synthesis of thiazole, in the thiamine biosynthesis pathway. The sulfur is donated as persulfide by IscS. In Streptococcus pyogenes serotype M12 (strain MGAS2096), this protein is Probable tRNA sulfurtransferase.